Reading from the N-terminus, the 701-residue chain is Elongation factor G 2 (701 aa).

Residues 8 to 290 (NRYRNIGIVA…AVIEFLPAPA (283 aa)) enclose the tr-type G domain. Residues 17-24 (AHVDAGKT), 88-92 (DTPGH), and 142-145 (NKMD) contribute to the GTP site.

The protein belongs to the TRAFAC class translation factor GTPase superfamily. Classic translation factor GTPase family. EF-G/EF-2 subfamily.

It localises to the cytoplasm. In terms of biological role, catalyzes the GTP-dependent ribosomal translocation step during translation elongation. During this step, the ribosome changes from the pre-translocational (PRE) to the post-translocational (POST) state as the newly formed A-site-bound peptidyl-tRNA and P-site-bound deacylated tRNA move to the P and E sites, respectively. Catalyzes the coordinated movement of the two tRNA molecules, the mRNA and conformational changes in the ribosome. The polypeptide is Elongation factor G 2 (Pseudoalteromonas atlantica (strain T6c / ATCC BAA-1087)).